We begin with the raw amino-acid sequence, 77 residues long: MSIEERVKKIIVDQLGVKAEDVKPEASFIEDLGADSLDTVELVMALEEEFDIEIPDEEAEKITTVQSAIDYVTKANA.

Positions 1–76 (MSIEERVKKI…SAIDYVTKAN (76 aa)) constitute a Carrier domain. S36 carries the post-translational modification O-(pantetheine 4'-phosphoryl)serine.

It belongs to the acyl carrier protein (ACP) family. Post-translationally, 4'-phosphopantetheine is transferred from CoA to a specific serine of apo-ACP by AcpS. This modification is essential for activity because fatty acids are bound in thioester linkage to the sulfhydryl of the prosthetic group.

The protein resides in the cytoplasm. The protein operates within lipid metabolism; fatty acid biosynthesis. Carrier of the growing fatty acid chain in fatty acid biosynthesis. The polypeptide is Acyl carrier protein (Actinobacillus pleuropneumoniae serotype 5b (strain L20)).